Here is a 313-residue protein sequence, read N- to C-terminus: Homoserine O-succinyltransferase (313 aa).

Cys-142 (acyl-thioester intermediate) is an active-site residue. Positions 163 and 192 each coordinate substrate. Residue His-235 is the Proton acceptor of the active site. Glu-237 is an active-site residue. Arg-249 serves as a coordination point for substrate.

Belongs to the MetA family.

The protein localises to the cytoplasm. The enzyme catalyses L-homoserine + succinyl-CoA = O-succinyl-L-homoserine + CoA. It participates in amino-acid biosynthesis; L-methionine biosynthesis via de novo pathway; O-succinyl-L-homoserine from L-homoserine: step 1/1. Transfers a succinyl group from succinyl-CoA to L-homoserine, forming succinyl-L-homoserine. The chain is Homoserine O-succinyltransferase from Shewanella sp. (strain MR-4).